Consider the following 236-residue polypeptide: Cutinase (236 aa).

The N-terminal stretch at 1 to 20 (MSLTLFSFLSLVSILCIVTA) is a signal peptide. A disulfide bridge links Cys66 with Cys143. Residue Ser154 is the Nucleophile of the active site. Cys202 and Cys209 form a disulfide bridge. The active site involves Asp206. His218 functions as the Proton donor/acceptor in the catalytic mechanism.

This sequence belongs to the cutinase family. In terms of processing, the 2 disulfide bonds play a critical role in holding the catalytic residues in juxta-position; reduction of the disulfide bridges results in the complete inactivation of the enzyme.

The protein resides in the secreted. It catalyses the reaction cutin + H2O = cutin monomers.. Catalyzes the hydrolysis of complex carboxylic polyesters found in the cell wall of plants. Degrades cutin, a macromolecule that forms the structure of the plant cuticle. Allows pathogenic fungi to penetrate through the cuticular barrier into the host plant during the initial stage of fungal infection. This Blumeria hordei (Barley powdery mildew) protein is Cutinase (CUT1).